The primary structure comprises 248 residues: MEQFKGLQKSLYIWTDSGELDKRVQALKEATGGEVAVENVHRLSFSSYANSSFDLIVIECAQLTDNYVKLLHMLKPSGKLHLFAYIGPAANLLQEIKLSGFINCSEDAAANTLTAEKPGYETGSSARLSFAKKSPSMNVWKISGDDEELIDEEELLDEEDKQKPDPAGLRVCSTTGKRKACKNCSCGLAEELEDEKKTKAATENAKSSCGNCYLGDAFRCSTCPYLGMPAFKPGEKVQLADNLLKSDI.

The interval 4–130 is N-terminal SAM-like domain; sequence FKGLQKSLYI…ETGSSARLSF (127 aa). The interval 131-161 is linker; the sequence is AKKSPSMNVWKISGDDEELIDEEELLDEEDK. [2Fe-2S] cluster contacts are provided by Cys172, Cys181, Cys184, and Cys186. The tract at residues 172-186 is fe-S binding site A; the sequence is CSTTGKRKACKNCSC. [4Fe-4S] cluster is bound by residues Cys209, Cys212, Cys220, and Cys223. Short sequence motifs (cx2C motif) lie at residues 209-212 and 220-223; these read CGNC and CSTC. Residues 209–223 are fe-S binding site B; it reads CGNCYLGDAFRCSTC.

The protein belongs to the anamorsin family. Monomer. [2Fe-2S] cluster serves as cofactor. The cofactor is [4Fe-4S] cluster.

It localises to the cytoplasm. The protein resides in the mitochondrion intermembrane space. In terms of biological role, component of the cytosolic iron-sulfur (Fe-S) protein assembly (CIA) machinery. Required for the maturation of extramitochondrial Fe-S proteins. Part of an electron transfer chain functioning in an early step of cytosolic Fe-S biogenesis, facilitating the de novo assembly of a [4Fe-4S] cluster on the cytosolic Fe-S scaffold complex. Electrons are transferred from NADPH via a FAD- and FMN-containing diflavin oxidoreductase. Together with the diflavin oxidoreductase, also required for the assembly of the diferric tyrosyl radical cofactor of ribonucleotide reductase (RNR), probably by providing electrons for reduction during radical cofactor maturation in the catalytic small subunit. This Drosophila mojavensis (Fruit fly) protein is Anamorsin homolog.